Reading from the N-terminus, the 590-residue chain is Pescadillo homolog (590 aa).

Residues 297–318 (AKADAGEEEEVEEEEEVEDDGL) are disordered. Residues 302-318 (GEEEEVEEEEEVEDDGL) are compositionally biased toward acidic residues. The 110-residue stretch at 337–446 (TAGQLFSNFT…KLLPVSEYAP (110 aa)) folds into the BRCT domain. Positions 452-590 (AHLSPWGDAG…RKLNEKKEKR (139 aa)) are disordered. Residues 471 to 499 (DASDDDEDDEDIEVAPEDYDKDDEEEEAE) are compositionally biased toward acidic residues. A coiled-coil region spans residues 489–589 (YDKDDEEEEA…RRKLNEKKEK (101 aa)). Basic and acidic residues-rich tracts occupy residues 500–517 (AEAK…KGTK), 532–547 (DKMT…DKKL), and 567–577 (NDKKSDREAEL).

This sequence belongs to the pescadillo family. In terms of assembly, component of the NOP7 complex, composed of ERB1, NOP7 and YTM1. The complex is held together by ERB1, which interacts with NOP7 via its N-terminal domain and with YTM1 via a high-affinity interaction between the seven-bladed beta-propeller domains of the 2 proteins. The NOP7 complex associates with the 66S pre-ribosome.

It localises to the nucleus. It is found in the nucleolus. The protein localises to the nucleoplasm. Component of the NOP7 complex, which is required for maturation of the 25S and 5.8S ribosomal RNAs and formation of the 60S ribosome. The polypeptide is Pescadillo homolog (Yarrowia lipolytica (strain CLIB 122 / E 150) (Yeast)).